The following is a 182-amino-acid chain: Ribosomal RNA small subunit methyltransferase G (182 aa).

Residues G58, F63, 109 to 110 (IE), and R123 contribute to the S-adenosyl-L-methionine site.

Belongs to the methyltransferase superfamily. RNA methyltransferase RsmG family.

It is found in the cytoplasm. The enzyme catalyses guanosine(527) in 16S rRNA + S-adenosyl-L-methionine = N(7)-methylguanosine(527) in 16S rRNA + S-adenosyl-L-homocysteine. Functionally, specifically methylates the N7 position of guanine in position 527 of 16S rRNA. The chain is Ribosomal RNA small subunit methyltransferase G from Campylobacter fetus subsp. fetus (strain 82-40).